The following is a 360-amino-acid chain: ASTRA-associated protein 1 (360 aa).

WD repeat units follow at residues Ala-9–Arg-46, Ala-49–Gly-86, Arg-167–Leu-205, and Pro-317–Leu-357.

It belongs to the WD repeat ASA1 family. In terms of assembly, component of the ASTRA chromatin remodeling machinery complex.

The protein localises to the nucleus. Component of the ASTRA complex involved in chromatin remodeling. The protein is ASTRA-associated protein 1 (ASA1) of Clavispora lusitaniae (strain ATCC 42720) (Yeast).